The chain runs to 59 residues: Embryonic testis differentiation protein homolog C (59 aa).

The segment at 1-22 (MDKELPKASPSEPALNIKKSGK) is disordered.

This chain is Embryonic testis differentiation protein homolog C, found in Homo sapiens (Human).